The following is a 349-amino-acid chain: Hydroxymethylglutaryl-CoA synthase (349 aa).

Residues Asp-29 and Ala-30 each contribute to the (3S)-3-hydroxy-3-methylglutaryl-CoA site. Glu-81 functions as the Proton donor/acceptor in the catalytic mechanism. (3S)-3-hydroxy-3-methylglutaryl-CoA is bound by residues Cys-113 and Thr-154. The active-site Acyl-thioester intermediate is Cys-113. A CoA-binding site is contributed by Arg-202. (3S)-3-hydroxy-3-methylglutaryl-CoA is bound by residues Thr-204 and His-237. His-237 serves as the catalytic Proton donor/acceptor. A CoA-binding site is contributed by Lys-242. (3S)-3-hydroxy-3-methylglutaryl-CoA contacts are provided by Lys-246, Asn-269, and Ser-299.

The protein belongs to the thiolase-like superfamily. Archaeal HMG-CoA synthase family. As to quaternary structure, interacts with acetoacetyl-CoA thiolase that catalyzes the precedent step in the pathway and with a DUF35 protein. The acetoacetyl-CoA thiolase/HMG-CoA synthase complex channels the intermediate via a fused CoA-binding site, which allows for efficient coupling of the endergonic thiolase reaction with the exergonic HMGCS reaction.

The enzyme catalyses acetoacetyl-CoA + acetyl-CoA + H2O = (3S)-3-hydroxy-3-methylglutaryl-CoA + CoA + H(+). Its pathway is metabolic intermediate biosynthesis; (R)-mevalonate biosynthesis; (R)-mevalonate from acetyl-CoA: step 2/3. Catalyzes the condensation of acetyl-CoA with acetoacetyl-CoA to form 3-hydroxy-3-methylglutaryl-CoA (HMG-CoA). Functions in the mevalonate (MVA) pathway leading to isopentenyl diphosphate (IPP), a key precursor for the biosynthesis of isoprenoid compounds that are building blocks of archaeal membrane lipids. The chain is Hydroxymethylglutaryl-CoA synthase from Methanosarcina acetivorans (strain ATCC 35395 / DSM 2834 / JCM 12185 / C2A).